Consider the following 365-residue polypeptide: NAD(P)H-quinone oxidoreductase subunit 1, chloroplastic (365 aa).

A run of 6 helical transmembrane segments spans residues 29 to 49 (IWLL…VLVI), 106 to 126 (IAVI…HLVL), 129 to 149 (LSIG…GLLM), 250 to 270 (YSGI…LVSS), 302 to 322 (IFGM…FLFI), and 338 to 358 (LLNL…LLTT).

The protein belongs to the complex I subunit 1 family. In terms of assembly, NDH is composed of at least 16 different subunits, 5 of which are encoded in the nucleus.

It localises to the plastid. The protein localises to the chloroplast thylakoid membrane. It carries out the reaction a plastoquinone + NADH + (n+1) H(+)(in) = a plastoquinol + NAD(+) + n H(+)(out). The catalysed reaction is a plastoquinone + NADPH + (n+1) H(+)(in) = a plastoquinol + NADP(+) + n H(+)(out). Functionally, NDH shuttles electrons from NAD(P)H:plastoquinone, via FMN and iron-sulfur (Fe-S) centers, to quinones in the photosynthetic chain and possibly in a chloroplast respiratory chain. The immediate electron acceptor for the enzyme in this species is believed to be plastoquinone. Couples the redox reaction to proton translocation, and thus conserves the redox energy in a proton gradient. The sequence is that of NAD(P)H-quinone oxidoreductase subunit 1, chloroplastic from Acorus calamus (Sweet flag).